The primary structure comprises 303 residues: GGSCGQCRVHIKEGGGDILPTELDHISKGEAREGCRLACQVNVKNDMEIELEESIFGVKKWDCEVISNDNKATFIKELKLQIPDGESVPFRAGGYIQIEAPAHHVKYADFDIPEEYRGDWNHFGFFDLESKVDEETIRAYSMANYPEEEGIIMLNVRIATPPPRNLSLPCGKMSSYIWSLKEGDKVTISGPFGEFFAKDTDAEMVFVGGGAGMAPMRSHIFDQLKRLNSKRKISFWYGARSKREMFYVEDFDGLAEQNENFVWHTALSDPQPEDNWEGYTGFIHNVLFENYLKDHEAPEDCEY.

Positions 1 to 55 (GGSCGQCRVHIKEGGGDILPTELDHISKGEAREGCRLACQVNVKNDMEIELEESI) constitute a 2Fe-2S ferredoxin-type domain. 3 residues coordinate [2Fe-2S] cluster: Cys-4, Cys-7, and Cys-39. In terms of domain architecture, FAD-binding FR-type spans 58–198 (VKKWDCEVIS…SGPFGEFFAK (141 aa)). Residues 201–303 (DAEMVFVGGG…DHEAPEDCEY (103 aa)) are catalytic.

Belongs to the NqrF family. As to quaternary structure, composed of six subunits; NqrA, NqrB, NqrC, NqrD, NqrE and NqrF. [2Fe-2S] cluster serves as cofactor. The cofactor is FAD.

The protein resides in the cell inner membrane. The enzyme catalyses a ubiquinone + n Na(+)(in) + NADH + H(+) = a ubiquinol + n Na(+)(out) + NAD(+). Its function is as follows. NQR complex catalyzes the reduction of ubiquinone-1 to ubiquinol by two successive reactions, coupled with the transport of Na(+) ions from the cytoplasm to the periplasm. The first step is catalyzed by NqrF, which accepts electrons from NADH and reduces ubiquinone-1 to ubisemiquinone by a one-electron transfer pathway. The chain is Na(+)-translocating NADH-quinone reductase subunit F (nqrF) from Pseudoalteromonas haloplanktis (Alteromonas haloplanktis).